Consider the following 712-residue polypeptide: Probable metal-nicotianamine transporter YSL11 (712 aa).

Residues 25–48 (RRNTTAAARGNAGEEEEEAEAVAP) are disordered. 14 helical membrane passes run 70–90 (AFVV…KLSL), 93–113 (GVIP…VRLW), 138–158 (CVVS…LFGM), 180–200 (LGWI…ALVP), 242–262 (LGKY…YTAG), 300–320 (IVNV…WPLI), 345–365 (VFIT…KVFG), 418–438 (VAIG…PLII), 446–466 (ILIA…GSGL), 478–498 (LAIF…LVGL), 532–552 (FVSQ…VFWL), 593–613 (LTLC…KDLV), 631–651 (FYLG…LYFW), and 666–686 (VASG…VLSL).

Belongs to the YSL (TC 2.A.67.2) family.

It is found in the membrane. Its function is as follows. May be involved in the transport of nicotianamine-chelated metals. The sequence is that of Probable metal-nicotianamine transporter YSL11 (YSL11) from Oryza sativa subsp. japonica (Rice).